A 569-amino-acid polypeptide reads, in one-letter code: Arginine--tRNA ligase (569 aa).

The 'HIGH' region motif lies at 128-138; it reads ANPTGPLHVGH.

It belongs to the class-I aminoacyl-tRNA synthetase family. As to quaternary structure, monomer.

Its subcellular location is the cytoplasm. It catalyses the reaction tRNA(Arg) + L-arginine + ATP = L-arginyl-tRNA(Arg) + AMP + diphosphate. This Paracidovorax citrulli (strain AAC00-1) (Acidovorax citrulli) protein is Arginine--tRNA ligase.